A 392-amino-acid polypeptide reads, in one-letter code: Glutamyl-tRNA(Gln) amidotransferase subunit D (392 aa).

One can recognise an Asparaginase/glutaminase domain in the interval 68–391 (GNLGFIYTGG…DGIKKEMKRL (324 aa)). Catalysis depends on residues Thr-78, Thr-152, Asp-153, and Lys-229.

It belongs to the asparaginase 1 family. GatD subfamily. As to quaternary structure, heterodimer of GatD and GatE.

The enzyme catalyses L-glutamyl-tRNA(Gln) + L-glutamine + ATP + H2O = L-glutaminyl-tRNA(Gln) + L-glutamate + ADP + phosphate + H(+). Allows the formation of correctly charged Gln-tRNA(Gln) through the transamidation of misacylated Glu-tRNA(Gln) in organisms which lack glutaminyl-tRNA synthetase. The reaction takes place in the presence of glutamine and ATP through an activated gamma-phospho-Glu-tRNA(Gln). The GatDE system is specific for glutamate and does not act on aspartate. The protein is Glutamyl-tRNA(Gln) amidotransferase subunit D (gatD) of Nanoarchaeum equitans (strain Kin4-M).